A 439-amino-acid polypeptide reads, in one-letter code: MFNNSIHKVSICIALTLTFSANAMAVTEIPFWHSMEGELGKEVDSIADRFNQSQPDYKIVPVYKGNYEQSLAAGIAAFRSGKAPAILQVYEVGTATMMASKAIKPVYQVFKDANIDFDESVFVPTVAGYYTDSKTGRLLSQPFNSSTPVLYYNKEAFKKAGLDPEQPPKTWQELAADTAKLRAAGSSCGYASGWQGWIQIENFSAWHGQPIASRNNGFDGTDAVLEFNKPLQIKHIQLLSDMNKKGDFTYFGRKDESTSKFYNGDCAITTASSGSLASIRHYAKFNFGVGMMPYDADAKNAPQNAIIGGASLWVMDGKDKETYKGVAEFLQYLVKPEIAAEWHQKTGYLPITTAAYELTKQQGFYEQNPGADVATRQMLNKPPLPYTKGLRLGNMPQIRTVVDEELEAVWTGKKTPQAALDNSVKRGDVLLRRFEQANK.

Residues 1-25 form the signal peptide; that stretch reads MFNNSIHKVSICIALTLTFSANAMA. The sn-glycerol 3-phosphate site is built by Tyr-67, Glu-91, Ser-146, Ser-272, Gly-309, Tyr-348, and Arg-399.

It belongs to the bacterial solute-binding protein 1 family. The complex is composed of two ATP-binding proteins (UgpC), two transmembrane proteins (UgpA and UgpE) and a solute-binding protein (UgpB).

Its subcellular location is the periplasm. Functionally, part of the ABC transporter complex UgpBAEC involved in sn-glycerol-3-phosphate (G3P) import. Binds G3P. In Yersinia pseudotuberculosis serotype I (strain IP32953), this protein is sn-glycerol-3-phosphate-binding periplasmic protein UgpB (ugpB).